We begin with the raw amino-acid sequence, 287 residues long: Universal stress protein Slr1230 (287 aa).

This sequence belongs to the universal stress protein A family.

The sequence is that of Universal stress protein Slr1230 from Synechocystis sp. (strain ATCC 27184 / PCC 6803 / Kazusa).